The sequence spans 349 residues: Quinolinate synthase (349 aa).

Residues His-52 and Ser-69 each coordinate iminosuccinate. Cys-114 is a [4Fe-4S] cluster binding site. Residues 140–142 (YFN) and Ser-157 each bind iminosuccinate. Cys-201 is a [4Fe-4S] cluster binding site. Iminosuccinate-binding positions include 227–229 (HPE) and Thr-255. Position 300 (Cys-300) interacts with [4Fe-4S] cluster.

It belongs to the quinolinate synthase family. Type 2 subfamily. It depends on [4Fe-4S] cluster as a cofactor.

The protein localises to the cytoplasm. The enzyme catalyses iminosuccinate + dihydroxyacetone phosphate = quinolinate + phosphate + 2 H2O + H(+). Its pathway is cofactor biosynthesis; NAD(+) biosynthesis; quinolinate from iminoaspartate: step 1/1. Its function is as follows. Catalyzes the condensation of iminoaspartate with dihydroxyacetone phosphate to form quinolinate. This chain is Quinolinate synthase, found in Mycolicibacterium paratuberculosis (strain ATCC BAA-968 / K-10) (Mycobacterium paratuberculosis).